We begin with the raw amino-acid sequence, 492 residues long: Bifunctional purine biosynthesis protein PurH (492 aa).

The 144-residue stretch at 1 to 144 (MKKAILSVSN…KNFKHVTTIV (144 aa)) folds into the MGS-like domain.

Belongs to the PurH family.

The enzyme catalyses (6R)-10-formyltetrahydrofolate + 5-amino-1-(5-phospho-beta-D-ribosyl)imidazole-4-carboxamide = 5-formamido-1-(5-phospho-D-ribosyl)imidazole-4-carboxamide + (6S)-5,6,7,8-tetrahydrofolate. It catalyses the reaction IMP + H2O = 5-formamido-1-(5-phospho-D-ribosyl)imidazole-4-carboxamide. It participates in purine metabolism; IMP biosynthesis via de novo pathway; 5-formamido-1-(5-phospho-D-ribosyl)imidazole-4-carboxamide from 5-amino-1-(5-phospho-D-ribosyl)imidazole-4-carboxamide (10-formyl THF route): step 1/1. It functions in the pathway purine metabolism; IMP biosynthesis via de novo pathway; IMP from 5-formamido-1-(5-phospho-D-ribosyl)imidazole-4-carboxamide: step 1/1. In Staphylococcus epidermidis (strain ATCC 35984 / DSM 28319 / BCRC 17069 / CCUG 31568 / BM 3577 / RP62A), this protein is Bifunctional purine biosynthesis protein PurH.